Here is a 247-residue protein sequence, read N- to C-terminus: Sortase A (247 aa).

Residues 1–9 (MRNKKKLHG) are Cytoplasmic-facing. Residues 10–30 (FFNFVRWLLVVLLIIVGLALV) traverse the membrane as a helical segment. At 31 to 247 (FNKPIRNAFI…FSKKYNQINL (217 aa)) the chain is on the extracellular side. The Proton donor/acceptor role is filled by His-140. Cys-206 acts as the Acyl-thioester intermediate in catalysis.

Belongs to the bacterial sortase family. Class A subfamily.

It is found in the cell membrane. Its function is as follows. Transpeptidase that anchors surface proteins to the cell wall. Recognizes and modifies its substrate by proteolytic cleavage of a C-terminal sorting signal. Following cleavage, a covalent intermediate is formed via a thioester bond between the sortase and its substrate, which is then transferred and covalently attached to the cell wall. This sortase recognizes a Leu-Pro-x-Thr-Gly (LPXTG) motif, which is cleaved by the sortase between the threonine and glycine residues. Essential for adherence to eukaryotic cells and for binding to fibronectin and fibrinogen. The chain is Sortase A from Streptococcus agalactiae serotype III (strain NEM316).